An 833-amino-acid polypeptide reads, in one-letter code: Putative GPI inositol-deacylase C (833 aa).

The active site involves Ser-130. Asn-191 and Asn-456 each carry an N-linked (GlcNAc...) asparagine glycan. 5 helical membrane passes run 521–541, 560–580, 617–637, 672–692, and 723–743; these read ILFI…QFHA, YLLT…LSQV, VLAP…TELV, TVFV…QLAF, and TICV…AVWI. Asn-772 is a glycosylation site (N-linked (GlcNAc...) asparagine). The helical transmembrane segment at 787–807 threads the bilayer; sequence LLLAYTSLHCLFYGMMQAFMI.

The protein belongs to the GPI inositol-deacylase family.

The protein resides in the endoplasmic reticulum membrane. Its function is as follows. Involved in inositol deacylation of GPI-anchored proteins which plays important roles in the quality control and ER-associated degradation of GPI-anchored proteins. This chain is Putative GPI inositol-deacylase C (BST1C), found in Yarrowia lipolytica (strain CLIB 122 / E 150) (Yeast).